Reading from the N-terminus, the 214-residue chain is MVFRRFVEVGRVAYVSFGPHAGKLVAIVDVIDQNRALVDGPCTQVRRQAMPFKCMQLTDFILKFPHSARQKYVRKAWEKADINAKWAATRWAKKIEAREKKAKMTDFDRYKVMKARKMRNRLIKIEVKKLQKAALLKASPKKALAAKGAAAVAAAAAAKVPAKKITTEGKKAPAQKAPAQKAAGQKAAPPPKTQKGQKAPSQKAPAPKASGKKA.

At K79 the chain carries N6-acetyllysine. Residue K85 is modified to N6-acetyllysine; alternate. At K85 the chain carries N6-succinyllysine; alternate. K124 participates in a covalent cross-link: Glycyl lysine isopeptide (Lys-Gly) (interchain with G-Cter in SUMO2). S139 is subject to Phosphoserine. The tract at residues 161–214 (PAKKITTEGKKAPAQKAPAQKAAGQKAAPPPKTQKGQKAPSQKAPAPKASGKKA) is disordered. A 1-1; approximate repeat occupies 170-174 (KKAPA). Positions 170 to 189 (KKAPAQKAPAQKAAGQKAAP) are 4 X 5 AA tandem repeats of Q-K-A-[APS]-X. Residues 172–214 (APAQKAPAQKAAGQKAAPPPKTQKGQKAPSQKAPAPKASGKKA) show a composition bias toward low complexity. A run of 5 repeats spans residues 175-179 (QKAPA), 180-184 (QKAAG), 185-189 (QKAAP), 192-194 (KTQ), and 195-197 (KGQ). A 2 X 3 AA tandem repeats of K-G-Q region spans residues 192–197 (KTQKGQ). K203 carries the N6-succinyllysine modification.

Belongs to the eukaryotic ribosomal protein eL14 family. Component of the large ribosomal subunit.

It localises to the cytoplasm. Its function is as follows. Component of the large ribosomal subunit. The ribosome is a large ribonucleoprotein complex responsible for the synthesis of proteins in the cell. The sequence is that of Large ribosomal subunit protein eL14 (RPL14) from Bos taurus (Bovine).